Reading from the N-terminus, the 152-residue chain is 3-hydroxyacyl-[acyl-carrier-protein] dehydratase FabZ (152 aa).

H58 is a catalytic residue.

The protein belongs to the thioester dehydratase family. FabZ subfamily.

Its subcellular location is the cytoplasm. It catalyses the reaction a (3R)-hydroxyacyl-[ACP] = a (2E)-enoyl-[ACP] + H2O. In terms of biological role, involved in unsaturated fatty acids biosynthesis. Catalyzes the dehydration of short chain beta-hydroxyacyl-ACPs and long chain saturated and unsaturated beta-hydroxyacyl-ACPs. The polypeptide is 3-hydroxyacyl-[acyl-carrier-protein] dehydratase FabZ (Prochlorococcus marinus (strain MIT 9515)).